A 79-amino-acid chain; its full sequence is Conotoxin Tr6.2 (79 aa).

Positions 1–22 are cleaved as a signal peptide; the sequence is MKLTCVLIISVLFLTASQLITA. A propeptide spanning residues 23–47 is cleaved from the precursor; that stretch reads VYSRDKQQYRAARLRDEMRNLKGAR. 3 cysteine pairs are disulfide-bonded: Cys49/Cys62, Cys56/Cys67, and Cys61/Cys77. 4-hydroxyproline is present on residues Pro60 and Pro63.

It belongs to the conotoxin O1 superfamily. As to expression, expressed by the venom duct.

It localises to the secreted. Ion channel inhibitor that inhibits the increase in intracellular calcium upon depolarization in DRG neurons. In vivo, both intraperitoneal and intracranial injections into mice induce hyperactivity. This chain is Conotoxin Tr6.2, found in Conus terebra (Sea snail).